A 77-amino-acid polypeptide reads, in one-letter code: Small ribosomal subunit protein bS18 (77 aa).

Belongs to the bacterial ribosomal protein bS18 family. As to quaternary structure, part of the 30S ribosomal subunit. Forms a tight heterodimer with protein bS6.

Binds as a heterodimer with protein bS6 to the central domain of the 16S rRNA, where it helps stabilize the platform of the 30S subunit. The polypeptide is Small ribosomal subunit protein bS18 (Bacillus cereus (strain ATCC 10987 / NRS 248)).